A 140-amino-acid chain; its full sequence is Ribosome maturation factor RimP (140 aa).

Belongs to the RimP family.

It localises to the cytoplasm. Functionally, required for maturation of 30S ribosomal subunits. The chain is Ribosome maturation factor RimP from Campylobacter jejuni subsp. jejuni serotype O:6 (strain 81116 / NCTC 11828).